We begin with the raw amino-acid sequence, 387 residues long: Protochlorophyllide reductase A, chloroplastic (387 aa).

A chloroplast-targeting transit peptide spans 1–35; it reads MALQVQAALLPSALSVPKKGNLSAVVKEPGFLSVS.

The protein belongs to the short-chain dehydrogenases/reductases (SDR) family. POR subfamily.

It localises to the plastid. The protein localises to the chloroplast. It carries out the reaction chlorophyllide a + NADP(+) = protochlorophyllide a + NADPH + H(+). The protein operates within porphyrin-containing compound metabolism; chlorophyll biosynthesis. Functionally, phototransformation of protochlorophyllide (Pchlide) to chlorophyllide (Chlide). The chain is Protochlorophyllide reductase A, chloroplastic (PORA) from Oryza sativa subsp. japonica (Rice).